The sequence spans 310 residues: Tagatose-6-phosphate kinase (310 aa).

Belongs to the carbohydrate kinase PfkB family. LacC subfamily.

The enzyme catalyses D-tagatofuranose 6-phosphate + ATP = D-tagatofuranose 1,6-bisphosphate + ADP + H(+). It participates in carbohydrate metabolism; D-tagatose 6-phosphate degradation; D-glyceraldehyde 3-phosphate and glycerone phosphate from D-tagatose 6-phosphate: step 1/2. The sequence is that of Tagatose-6-phosphate kinase from Staphylococcus aureus (strain Mu3 / ATCC 700698).